Here is a 274-residue protein sequence, read N- to C-terminus: 2,3,4,5-tetrahydropyridine-2,6-dicarboxylate N-succinyltransferase (274 aa).

The substrate site is built by R106 and D143.

The protein belongs to the transferase hexapeptide repeat family. As to quaternary structure, homotrimer.

The protein resides in the cytoplasm. It catalyses the reaction (S)-2,3,4,5-tetrahydrodipicolinate + succinyl-CoA + H2O = (S)-2-succinylamino-6-oxoheptanedioate + CoA. Its pathway is amino-acid biosynthesis; L-lysine biosynthesis via DAP pathway; LL-2,6-diaminopimelate from (S)-tetrahydrodipicolinate (succinylase route): step 1/3. The polypeptide is 2,3,4,5-tetrahydropyridine-2,6-dicarboxylate N-succinyltransferase (Rickettsia felis (strain ATCC VR-1525 / URRWXCal2) (Rickettsia azadi)).